The chain runs to 66 residues: Large ribosomal subunit protein uL29 (66 aa).

This sequence belongs to the universal ribosomal protein uL29 family.

The chain is Large ribosomal subunit protein uL29 from Thermotoga neapolitana (strain ATCC 49049 / DSM 4359 / NBRC 107923 / NS-E).